We begin with the raw amino-acid sequence, 230 residues long: All-trans retinoic acid-induced differentiation factor (230 aa).

A signal peptide spans 1 to 26 (MTANVTVSSMYLFTVLLLLFNVYVNS). Residues 27 to 200 (QDTDAQLCQM…YKCMRQGEFP (174 aa)) are Extracellular-facing. An EGF-like domain is found at 152–194 (QKNACNQTVQMPLVCPENSLCSPYGPGFFECSCLNNFHGYKCM). Cystine bridges form between cysteine 156-cysteine 172, cysteine 166-cysteine 182, and cysteine 184-cysteine 193. A helical membrane pass occupies residues 201–221 (LVKVLGILTASTVVVSSVLWF). The Cytoplasmic segment spans residues 222–230 (TQRRKVKNT).

It is found in the nucleus envelope. It localises to the cell membrane. The protein localises to the lysosome membrane. Functionally, involved in osteoblast cell differentiation. May play a role in inducing the cell cycle arrest. This is All-trans retinoic acid-induced differentiation factor (atraid) from Danio rerio (Zebrafish).